A 246-amino-acid polypeptide reads, in one-letter code: MRVGIIGCSGRMGTLLSNLLRATARFTLGPGFSRTSTHSLASVIDNNDVLVDFSSSSLSEELFRALLSNPKPLIFATTKPAPSSSIDEKIEDLAAYVPVVVCPNTSLGAYVQKRLAALLAAVFDDAYDIRITEVHHRGKKDAISGTANELVSILCDAKKKEWQQEYRVGADSDSVKNIELHASRVGNISGEHEIAFISDKEQITLRHTVFSREVFAEGVLRILDWLLNESPPPGCYGPEVGLKVSV.

Position 7–12 (7–12 (GCSGRM)) interacts with NAD(+). Arg-34 lines the NADP(+) pocket. NAD(+)-binding positions include 76 to 78 (ATT) and 102 to 105 (CPNT). His-135 acts as the Proton donor/acceptor in catalysis. (S)-2,3,4,5-tetrahydrodipicolinate is bound at residue His-136. The active-site Proton donor is Lys-139. 145–146 (GT) contacts (S)-2,3,4,5-tetrahydrodipicolinate.

This sequence belongs to the DapB family.

Its subcellular location is the cytoplasm. It catalyses the reaction (S)-2,3,4,5-tetrahydrodipicolinate + NAD(+) + H2O = (2S,4S)-4-hydroxy-2,3,4,5-tetrahydrodipicolinate + NADH + H(+). The catalysed reaction is (S)-2,3,4,5-tetrahydrodipicolinate + NADP(+) + H2O = (2S,4S)-4-hydroxy-2,3,4,5-tetrahydrodipicolinate + NADPH + H(+). The protein operates within amino-acid biosynthesis; L-lysine biosynthesis via DAP pathway; (S)-tetrahydrodipicolinate from L-aspartate: step 4/4. Catalyzes the conversion of 4-hydroxy-tetrahydrodipicolinate (HTPA) to tetrahydrodipicolinate. The protein is 4-hydroxy-tetrahydrodipicolinate reductase of Chlamydia caviae (strain ATCC VR-813 / DSM 19441 / 03DC25 / GPIC) (Chlamydophila caviae).